Reading from the N-terminus, the 261-residue chain is MTASPRYWIGTSWKMNKTLAEARGFAEALRDADALRDPAIQRFIIPPFTAVREVKSILSDTSVKVGAQNMHWADQGAWTGEVSPLMLRDCNLDIVELGHSERREHFGETNETVGLKTEAAVRHGLIPLICIGETLSDRESGRAAEILSEQVVGALSKLSGSQKQAQILLAYEPVWAIGEKGIPAEPSYADARQAEIIAVAEKVLGRRIPCLYGGSVNPDNCEELISCPHIDGLFIGRSAWNVEGYLDILAKCAAKLRGDTK.

The active-site Electrophile is the H99. Residue E172 is the Proton acceptor of the active site.

The protein belongs to the triosephosphate isomerase family.

It catalyses the reaction L-erythrulose 1-phosphate = D-erythrulose 4-phosphate. The protein operates within carbohydrate metabolism. Its function is as follows. Involved in catabolism of D-apiose. Catalyzes the isomerization of L-erythrulose 1-phosphate to D-erythrulose 4-phosphate. The protein is L-erythrulose-1-phosphate isomerase of Rhizobium rhizogenes (strain K84 / ATCC BAA-868) (Agrobacterium radiobacter).